Reading from the N-terminus, the 593-residue chain is Maternal uncoordinated protein 2 (593 aa).

This sequence belongs to the SCC4/mau-2 family. In terms of assembly, may heterodimerize with scc-2/SCC2 to form the cohesin loading complex.

The protein localises to the nucleus. It localises to the nucleoplasm. Its subcellular location is the cytoplasm. Functionally, plays an important role in the loading of the cohesin complex on to DNA. Forms a heterodimeric complex (also known as cohesin loading complex) with scc-2/SCC2 which mediates the loading of the cohesin complex onto chromatin. Required for normal development until the fourth larval stage. Functions cell autonomously to guide migrations during the development of the nervous system. Participates in the guidance of mechanosensory neuron AVM by a slt-1-independent mechanism. Regulates chromosome segregation in early embryos. The sequence is that of Maternal uncoordinated protein 2 from Caenorhabditis elegans.